We begin with the raw amino-acid sequence, 197 residues long: Putative double homeobox protein 3 (197 aa).

2 DNA-binding regions (homeobox) span residues 46–105 (GRRM…LRQH) and 121–180 (GRRK…WGQS). A disordered region spans residues 102–127 (LRQHRRQSRPWPGRRDPQKGRRKRTA).

It belongs to the paired homeobox family. As to expression, expressed in hepatoma Hep3B cells.

It is found in the nucleus. The polypeptide is Putative double homeobox protein 3 (DUX3) (Homo sapiens (Human)).